A 332-amino-acid polypeptide reads, in one-letter code: Ferredoxin--NADP reductase (332 aa).

Residues Asp33, Gln41, Tyr46, Ala86, Phe120, Asp286, and Thr327 each contribute to the FAD site.

Belongs to the ferredoxin--NADP reductase type 2 family. In terms of assembly, homodimer. FAD serves as cofactor.

The catalysed reaction is 2 reduced [2Fe-2S]-[ferredoxin] + NADP(+) + H(+) = 2 oxidized [2Fe-2S]-[ferredoxin] + NADPH. This chain is Ferredoxin--NADP reductase, found in Rickettsia bellii (strain OSU 85-389).